A 521-amino-acid chain; its full sequence is Phospholipase C B (521 aa).

A signal peptide (tat-type signal) is located at residues 1–39; that stretch reads MGSEHPVDGMTRRQFFAKAAAATTAGAFMSLAGPIIEKA. A disordered region spans residues 501–521; the sequence is FPQSMPTQETAPTRGIPSGLC.

Belongs to the bacterial phospholipase C family. Predicted to be exported by the Tat system. The position of the signal peptide cleavage has not been experimentally proven.

It is found in the secreted. The protein localises to the cell wall. It carries out the reaction a 1,2-diacyl-sn-glycero-3-phosphocholine + H2O = phosphocholine + a 1,2-diacyl-sn-glycerol + H(+). In terms of biological role, involved in virulence. Induces cytotoxic effects on mouse macrophage cell lines, via direct or indirect enzymatic hydrolysis of cell membrane phospholipids. Hydrolyzes phosphatidylcholine. The sequence is that of Phospholipase C B from Mycobacterium tuberculosis (strain CDC 1551 / Oshkosh).